A 188-amino-acid chain; its full sequence is uncharacterized protein (188 aa).

This sequence belongs to the isochorismatase family.

This is an uncharacterized protein from Escherichia coli O157:H7.